A 491-amino-acid chain; its full sequence is Protein nucleotidyltransferase YdiU (491 aa).

ATP contacts are provided by G88, G90, R91, K111, D123, G124, R174, and R181. Residue D250 is the Proton acceptor of the active site. Mg(2+) contacts are provided by N251 and D260. Position 260 (D260) interacts with ATP.

It belongs to the SELO family. Mg(2+) serves as cofactor. It depends on Mn(2+) as a cofactor.

It catalyses the reaction L-seryl-[protein] + ATP = 3-O-(5'-adenylyl)-L-seryl-[protein] + diphosphate. The enzyme catalyses L-threonyl-[protein] + ATP = 3-O-(5'-adenylyl)-L-threonyl-[protein] + diphosphate. The catalysed reaction is L-tyrosyl-[protein] + ATP = O-(5'-adenylyl)-L-tyrosyl-[protein] + diphosphate. It carries out the reaction L-histidyl-[protein] + UTP = N(tele)-(5'-uridylyl)-L-histidyl-[protein] + diphosphate. It catalyses the reaction L-seryl-[protein] + UTP = O-(5'-uridylyl)-L-seryl-[protein] + diphosphate. The enzyme catalyses L-tyrosyl-[protein] + UTP = O-(5'-uridylyl)-L-tyrosyl-[protein] + diphosphate. Nucleotidyltransferase involved in the post-translational modification of proteins. It can catalyze the addition of adenosine monophosphate (AMP) or uridine monophosphate (UMP) to a protein, resulting in modifications known as AMPylation and UMPylation. The polypeptide is Protein nucleotidyltransferase YdiU (Bradyrhizobium diazoefficiens (strain JCM 10833 / BCRC 13528 / IAM 13628 / NBRC 14792 / USDA 110)).